A 200-amino-acid polypeptide reads, in one-letter code: NADH-quinone oxidoreductase subunit C (200 aa).

The protein belongs to the complex I 30 kDa subunit family. NDH-1 is composed of 14 different subunits. Subunits NuoB, C, D, E, F, and G constitute the peripheral sector of the complex.

It is found in the cell inner membrane. It carries out the reaction a quinone + NADH + 5 H(+)(in) = a quinol + NAD(+) + 4 H(+)(out). NDH-1 shuttles electrons from NADH, via FMN and iron-sulfur (Fe-S) centers, to quinones in the respiratory chain. The immediate electron acceptor for the enzyme in this species is believed to be ubiquinone. Couples the redox reaction to proton translocation (for every two electrons transferred, four hydrogen ions are translocated across the cytoplasmic membrane), and thus conserves the redox energy in a proton gradient. This chain is NADH-quinone oxidoreductase subunit C, found in Burkholderia ambifaria (strain ATCC BAA-244 / DSM 16087 / CCUG 44356 / LMG 19182 / AMMD) (Burkholderia cepacia (strain AMMD)).